The primary structure comprises 772 residues: Transcription factor sdnS (772 aa).

The zn(2)-C6 fungal-type DNA-binding region spans 23–53; that stretch reads CWECRRRKIRCQFGAGNDTVCLPCQARGSTC. 2 disordered regions span residues 94–121 and 156–180; these read EAGG…SAQN and ASML…NSKT. Over residues 100 to 121 the composition is skewed to polar residues; sequence ANRSTTQSNRGSRSPSPDSAQN.

The protein localises to the nucleus. Its pathway is antibiotic biosynthesis. Transcription factor; part of the gene cluster that mediates the biosynthesis of sordarin and hypoxysordarin, glycoside antibiotics with a unique tetracyclic diterpene aglycone structure. First, the geranylgeranyl diphosphate synthase sdnC constructs GGDP from farnesyl diphosphate and isopentenyl diphosphate. The diterpene cyclase sdnA then catalyzes the cyclization of GGDP to afford cycloaraneosene. Cycloaraneosene is then hydroxylated four times by the putative cytochrome P450 monooxygenases sdnB, sdnE, sdnF and sdnH to give a hydroxylated cycloaraneosene derivative such as cycloaraneosene-8,9,13,19-tetraol. Although the order of the hydroxylations is unclear, at least C8, C9 and C13 of the cycloaraneosene skeleton are hydroxylated before the sordaricin formation. Dehydration of the 13-hydroxy group of the hydroxylated cycloaraneosene derivative might be catalyzed by an unassigned hypothetical protein such as sdnG and sdnP to construct the cyclopentadiene moiety. The FAD-dependent oxidoreductase sdnN is proposed to catalyze the oxidation at C9 of the hydroxylated cycloaraneosene derivative and also catalyze the Baeyer-Villiger oxidation to give the lactone intermediate. The presumed lactone intermediate would be hydrolyzed to give an acrolein moiety and a carboxylate moiety. Then, [4+2]cycloaddition would occur between the acrolein moiety and the cyclopentadiene moiety to give sordaricin. SdnN might also be involved in the [4+2]cycloaddition after the hypothesized oxidation to accommodate the oxidized product and prompt the [4+2]cycloaddition. GDP-6-deoxy-D-altrose may be biosynthesized from GDP-D-mannose by the putative GDP-mannose-4,6-dehydratase sdnI and the short-chain dehydrogenase sdnK. The glycosyltransferase sdnJ catalyzes the attachment of 6-deoxy-D-altrose onto the 19-hydroxy group of sordaricin to give 4'-O-demethylsordarin. The methyltransferase sdnD would complete the biosynthesis of sordarin. Sordarin can be further modified into hypoxysordarin. The unique acyl chain at the 3'-hydroxy group of hypoxysordarin would be constructed by an iterative type I PKS sdnO and the trans-acting polyketide methyltransferase sdnL. SdnL would be responsible for the introduction of an alpha-methyl group of the polyketide chain. Alternatively, the beta-lactamase-like protein sdnR might be responsible for the cleavage and transfer of the polyketide chain from the PKS sdnO to sordarin. Two putative cytochrome P450 monooxygenases, sdnQ and sdnT, might catalyze the epoxidations of the polyketide chain to complete the biosynthesis of hypoxysordarin. Transcriptional regulators sdnM and sdnS are presumably encoded for the transcriptional regulation of the expression of the sdn gene cluster. This is Transcription factor sdnS from Sordaria araneosa (Pleurage araneosa).